A 223-amino-acid chain; its full sequence is Type II restriction enzyme BglII (223 aa).

Mg(2+) contacts are provided by aspartate 84 and valine 94.

As to quaternary structure, homodimer. Requires Mg(2+) as cofactor.

The catalysed reaction is Endonucleolytic cleavage of DNA to give specific double-stranded fragments with terminal 5'-phosphates.. Functionally, a P subtype restriction enzyme that recognizes the double-stranded sequence 5'-AGATCT-3' and cleaves after A-1. The polypeptide is Type II restriction enzyme BglII (bglIIR) (Bacillus subtilis).